The following is a 517-amino-acid chain: Ribonuclease Y (517 aa).

Residues 1 to 21 (MIESLIALIAAIVGLGIGYLV) traverse the membrane as a helical segment. The KH domain occupies 207 to 273 (LINVINIKND…TKVIELLVED (67 aa)). Residues 333–426 (ALAHSLEVAH…VCAADTLSAA (94 aa)) enclose the HD domain.

The protein belongs to the RNase Y family.

The protein resides in the cell membrane. Its function is as follows. Endoribonuclease that initiates mRNA decay. The chain is Ribonuclease Y from Campylobacter jejuni subsp. jejuni serotype O:23/36 (strain 81-176).